We begin with the raw amino-acid sequence, 538 residues long: Diacylglycerol O-acyltransferase 1-1 (538 aa).

Disordered regions lie at residues 1–39 (MVGS…GAIV) and 54–106 (AAAA…GGGR). Residues 69–83 (EAASGEPSSSSSSSP) are compositionally biased toward low complexity. Helical transmembrane passes span 136–156 (AIFK…LVAV), 186–206 (WPLL…FAVE), 218–238 (VATC…VLVI), 245–265 (VLSG…LVSF), 293–313 (NLQP…TLCY), 326–346 (GWLI…GFII), and 382–402 (LWLC…AEIL). The short motif at 409-415 (FYKDWWN) is the FYXDWWN motif element. A run of 3 helical transmembrane segments spans residues 451-471 (VAVL…VAVP), 474-494 (ILKF…VLTA), and 505-525 (VGNM…CLLL). Residue His-464 is part of the active site.

Belongs to the membrane-bound acyltransferase family. Sterol o-acyltransferase subfamily.

It localises to the endoplasmic reticulum membrane. The enzyme catalyses an acyl-CoA + a 1,2-diacyl-sn-glycerol = a triacyl-sn-glycerol + CoA. Its pathway is glycerolipid metabolism; triacylglycerol biosynthesis. In terms of biological role, involved in triacylglycerol (TAG) synthesis. Catalyzes the acylation of the sn-3 hydroxy group of sn-1,2-diacylglycerol using acyl-CoA. The sequence is that of Diacylglycerol O-acyltransferase 1-1 from Oryza sativa subsp. japonica (Rice).